The chain runs to 180 residues: Ribosome rescue factor SmrB (180 aa).

Positions 98-173 (LDLHGLTQLI…GDAALLLLVE (76 aa)) constitute a Smr domain.

The protein belongs to the SmrB family. In terms of assembly, associates with collided ribosomes, but not with correctly translating polysomes.

Acts as a ribosome collision sensor. Detects stalled/collided disomes (pairs of ribosomes where the leading ribosome is stalled and a second ribosome has collided with it) and endonucleolytically cleaves mRNA at the 5' boundary of the stalled ribosome. Stalled/collided disomes form a new interface (primarily via the 30S subunits) that binds SmrB. Cleaved mRNA becomes available for tmRNA ligation, leading to ribosomal subunit dissociation and rescue of stalled ribosomes. The protein is Ribosome rescue factor SmrB of Proteus mirabilis (strain HI4320).